Consider the following 295-residue polypeptide: 4-hydroxy-tetrahydrodipicolinate synthase (295 aa).

T46 is a pyruvate binding site. The active-site Proton donor/acceptor is the Y135. K164 functions as the Schiff-base intermediate with substrate in the catalytic mechanism. I205 is a binding site for pyruvate.

It belongs to the DapA family. In terms of assembly, homotetramer; dimer of dimers.

It localises to the cytoplasm. The catalysed reaction is L-aspartate 4-semialdehyde + pyruvate = (2S,4S)-4-hydroxy-2,3,4,5-tetrahydrodipicolinate + H2O + H(+). The protein operates within amino-acid biosynthesis; L-lysine biosynthesis via DAP pathway; (S)-tetrahydrodipicolinate from L-aspartate: step 3/4. In terms of biological role, catalyzes the condensation of (S)-aspartate-beta-semialdehyde [(S)-ASA] and pyruvate to 4-hydroxy-tetrahydrodipicolinate (HTPA). The polypeptide is 4-hydroxy-tetrahydrodipicolinate synthase (Aliarcobacter butzleri (strain RM4018) (Arcobacter butzleri)).